The primary structure comprises 309 residues: Homoserine O-succinyltransferase (309 aa).

Cys142 serves as the catalytic Acyl-thioester intermediate. Residues Lys163 and Ser192 each contribute to the substrate site. His235 acts as the Proton acceptor in catalysis. Glu237 is an active-site residue. Residue Arg249 coordinates substrate.

The protein belongs to the MetA family.

It localises to the cytoplasm. It carries out the reaction L-homoserine + succinyl-CoA = O-succinyl-L-homoserine + CoA. The protein operates within amino-acid biosynthesis; L-methionine biosynthesis via de novo pathway; O-succinyl-L-homoserine from L-homoserine: step 1/1. Transfers a succinyl group from succinyl-CoA to L-homoserine, forming succinyl-L-homoserine. The polypeptide is Homoserine O-succinyltransferase (Photorhabdus laumondii subsp. laumondii (strain DSM 15139 / CIP 105565 / TT01) (Photorhabdus luminescens subsp. laumondii)).